The chain runs to 232 residues: 7-cyano-7-deazaguanine synthase (232 aa).

8–18 (FSGGQDSTTCL) is a binding site for ATP. Zn(2+) is bound by residues C189, C198, C201, and C204.

It belongs to the QueC family. It depends on Zn(2+) as a cofactor.

It catalyses the reaction 7-carboxy-7-deazaguanine + NH4(+) + ATP = 7-cyano-7-deazaguanine + ADP + phosphate + H2O + H(+). It functions in the pathway purine metabolism; 7-cyano-7-deazaguanine biosynthesis. Functionally, catalyzes the ATP-dependent conversion of 7-carboxy-7-deazaguanine (CDG) to 7-cyano-7-deazaguanine (preQ(0)). This Photorhabdus laumondii subsp. laumondii (strain DSM 15139 / CIP 105565 / TT01) (Photorhabdus luminescens subsp. laumondii) protein is 7-cyano-7-deazaguanine synthase.